Here is a 198-residue protein sequence, read N- to C-terminus: Inner membrane-spanning protein YciB (198 aa).

A run of 5 helical transmembrane segments spans residues 36-56 (IFSA…ILYI), 67-87 (LTLV…SETF), 90-110 (WKAP…HFIG), 133-153 (LNIA…YVAF), and 162-182 (FKVF…GIYL).

Belongs to the YciB family.

It is found in the cell inner membrane. In terms of biological role, plays a role in cell envelope biogenesis, maintenance of cell envelope integrity and membrane homeostasis. The chain is Inner membrane-spanning protein YciB from Pseudomonas syringae pv. tomato (strain ATCC BAA-871 / DC3000).